Reading from the N-terminus, the 278-residue chain is Digeranylgeranylglyceryl phosphate synthase (278 aa).

7 consecutive transmembrane segments (helical) span residues 12 to 32 (LKNCLTAGFGALISGLIASNF), 34 to 54 (FGALFPLILAFLVVFFICGFG), 92 to 112 (IMIFGLIISLFNIYCFLMAVL), 129 to 149 (IIGNMLVAYLTGSVFIFGGIA), 199 to 219 (IYISLGLLLIAIGLSFLPYLT), 221 to 241 (IFGIYYLLMILICNLMFLAGF), and 257 to 277 (SKNIKLITNFVLIAFIIGSIF).

Belongs to the UbiA prenyltransferase family. DGGGP synthase subfamily. Mg(2+) serves as cofactor.

The protein resides in the cell membrane. The catalysed reaction is sn-3-O-(geranylgeranyl)glycerol 1-phosphate + (2E,6E,10E)-geranylgeranyl diphosphate = 2,3-bis-O-(geranylgeranyl)-sn-glycerol 1-phosphate + diphosphate. The protein operates within membrane lipid metabolism; glycerophospholipid metabolism. In terms of biological role, prenyltransferase that catalyzes the transfer of the geranylgeranyl moiety of geranylgeranyl diphosphate (GGPP) to the C2 hydroxyl of (S)-3-O-geranylgeranylglyceryl phosphate (GGGP). This reaction is the second ether-bond-formation step in the biosynthesis of archaeal membrane lipids. The chain is Digeranylgeranylglyceryl phosphate synthase from Methanococcus vannielii (strain ATCC 35089 / DSM 1224 / JCM 13029 / OCM 148 / SB).